Here is a 74-residue protein sequence, read N- to C-terminus: Small ribosomal subunit protein bS18 (74 aa).

Belongs to the bacterial ribosomal protein bS18 family. In terms of assembly, part of the 30S ribosomal subunit. Forms a tight heterodimer with protein bS6.

Its function is as follows. Binds as a heterodimer with protein bS6 to the central domain of the 16S rRNA, where it helps stabilize the platform of the 30S subunit. The sequence is that of Small ribosomal subunit protein bS18 from Novosphingobium aromaticivorans (strain ATCC 700278 / DSM 12444 / CCUG 56034 / CIP 105152 / NBRC 16084 / F199).